The following is a 301-amino-acid chain: Ribosomal RNA small subunit methyltransferase A (301 aa).

Positions 18, 20, 45, 66, 91, and 112 each coordinate S-adenosyl-L-methionine. Residues 267-301 form a disordered region; the sequence is PPEAAPVKEKRRMAKNKMTEPANNNLNENSAPEVD. The span at 287 to 301 shows a compositional bias: polar residues; it reads PANNNLNENSAPEVD.

The protein belongs to the class I-like SAM-binding methyltransferase superfamily. rRNA adenine N(6)-methyltransferase family. RsmA subfamily.

It localises to the cytoplasm. The catalysed reaction is adenosine(1518)/adenosine(1519) in 16S rRNA + 4 S-adenosyl-L-methionine = N(6)-dimethyladenosine(1518)/N(6)-dimethyladenosine(1519) in 16S rRNA + 4 S-adenosyl-L-homocysteine + 4 H(+). In terms of biological role, specifically dimethylates two adjacent adenosines (A1518 and A1519) in the loop of a conserved hairpin near the 3'-end of 16S rRNA in the 30S particle. May play a critical role in biogenesis of 30S subunits. The sequence is that of Ribosomal RNA small subunit methyltransferase A from Colwellia psychrerythraea (strain 34H / ATCC BAA-681) (Vibrio psychroerythus).